We begin with the raw amino-acid sequence, 471 residues long: MKPKTIIEKIWENHVVYREDGKPDLLYIDLHLVHEVTSPQAFEGLRQKGRKVRRPDLTFATMDHNVPTVNRLVIEDEVARNQIAALERNCREFSIPLADLRSEEQGIVHVIGPELGLTQPGKTIVCGDSHTSTHGAFGALAFGIGTSEVEHVLATQTLWQHKPKTLQIRINGKLGEGVTAKDVILAIIGRYGVDVGTGYIIEFTGEVIRNMSMEERMTICNMSIEAGARAGLVSPDETTFAYLRGRKYAPKGEEFEKAVERWRALATDEGAEYDKTIEIDASTIAPMVTWGTNPSMSTSIEGTVPYPEDFSSETEQKAVRRALEYMGLEPGTPITEIPVQHVFIGSCTNSRISDLREAAKIVKGKKVAKGVRALVVPGSQQVKKQAEEEGLAQIFIDAGFEWRDSGCSACLGMNPDIIPEGEHCASTSNRNFEGRQGKGARTHLVSPAMAAAAAIYGHFVDVRKLQKEPVH.

[4Fe-4S] cluster is bound by residues cysteine 347, cysteine 407, and cysteine 410.

Belongs to the aconitase/IPM isomerase family. LeuC type 1 subfamily. As to quaternary structure, heterodimer of LeuC and LeuD. Requires [4Fe-4S] cluster as cofactor.

It carries out the reaction (2R,3S)-3-isopropylmalate = (2S)-2-isopropylmalate. It participates in amino-acid biosynthesis; L-leucine biosynthesis; L-leucine from 3-methyl-2-oxobutanoate: step 2/4. Catalyzes the isomerization between 2-isopropylmalate and 3-isopropylmalate, via the formation of 2-isopropylmaleate. The chain is 3-isopropylmalate dehydratase large subunit from Geobacillus sp. (strain WCH70).